A 322-amino-acid polypeptide reads, in one-letter code: Ras-like protein 2 (322 aa).

Residues 20 to 25, 36 to 42, 66 to 67, and 123 to 126 each bind GTP; these read GVGKSA, VDEYDPT, AG, and NKSD. Residues 39–47 carry the Effector region motif; that stretch reads YDPTIEDSY. Residue Lys131 forms a Glycyl lysine isopeptide (Lys-Gly) (interchain with G-Cter in ubiquitin) linkage. GTP is bound at residue 153–155; the sequence is SAK. A disordered region spans residues 178-322; sequence YNKTLTENDN…SGSGGCCIIS (145 aa). Over residues 180-205 the composition is skewed to polar residues; that stretch reads KTLTENDNSKQTSQDTKGSGANSVPR. Phosphoserine is present on residues Ser198, Ser202, Ser207, Ser214, Ser235, and Ser238. The span at 215-252 shows a compositional bias: polar residues; sequence NAANGKNVNSSTTVVNARNASIESKTGLAGNQATNGKT. The segment covering 261-284 has biased composition (low complexity); the sequence is NSTGQAGQANAQSANTVNNRVNNN. The span at 285–294 shows a compositional bias: polar residues; it reads SKAGQVSNAK. Residue Cys318 is the site of S-palmitoyl cysteine attachment. Cys319 is modified (cysteine methyl ester). Residue Cys319 is the site of S-farnesyl cysteine attachment. A propeptide spans 320–322 (removed in mature form); that stretch reads IIS.

This sequence belongs to the small GTPase superfamily. Ras family. Farnesylated by RAM1-RAM2, which is required for targeting RAS2 to the cytoplasmic site of the endoplasmic reticulum, where proteolytic processing of the C-terminus by RCE1 and methylation of the resulting carboxyl group by STE14 occurs. In terms of processing, palmitoylated by the ERF2-SHR5 complex, which is required for proper plasma membrane localization of RAS2.

It localises to the cell membrane. It carries out the reaction GTP + H2O = GDP + phosphate + H(+). With respect to regulation, alternates between an inactive form bound to GDP and an active form bound to GTP. Activated by guanine nucleotide-exchange factor (GEF) CDC25 and inactivated by GTPase-activating proteins (GAPs) IRA1 and IRA2. Functionally, the S.cerevisiae Ras proteins modulate the activity of the adenylate cyclase catalytic subunit and therefore affect the biosynthesis of cyclic-AMP. The polypeptide is Ras-like protein 2 (RAS2) (Saccharomyces cerevisiae (strain ATCC 204508 / S288c) (Baker's yeast)).